A 352-amino-acid polypeptide reads, in one-letter code: Protein RecA (352 aa).

Residue Gly67–Thr74 participates in ATP binding.

It belongs to the RecA family.

The protein resides in the cytoplasm. In terms of biological role, can catalyze the hydrolysis of ATP in the presence of single-stranded DNA, the ATP-dependent uptake of single-stranded DNA by duplex DNA, and the ATP-dependent hybridization of homologous single-stranded DNAs. It interacts with LexA causing its activation and leading to its autocatalytic cleavage. This is Protein RecA from Enterobacter sp. (strain 638).